The following is a 657-amino-acid chain: Glycogen debranching enzyme (657 aa).

Asp336 functions as the Nucleophile in the catalytic mechanism. Glu371 serves as the catalytic Proton donor. The tract at residues 460 to 479 is disordered; sequence ANGEENRDGTNNNYSNNHGK.

This sequence belongs to the glycosyl hydrolase 13 family.

It catalyses the reaction Hydrolysis of (1-&gt;6)-alpha-D-glucosidic linkages to branches with degrees of polymerization of three or four glucose residues in limit dextrin.. Its pathway is glycan degradation; glycogen degradation. Functionally, removes maltotriose and maltotetraose chains that are attached by 1,6-alpha-linkage to the limit dextrin main chain, generating a debranched limit dextrin. The protein is Glycogen debranching enzyme of Escherichia coli (strain UTI89 / UPEC).